A 401-amino-acid chain; its full sequence is Subtilisin-like protease 10 (401 aa).

Positions M1–A19 are cleaved as a signal peptide. Positions A20–Q116 are excised as a propeptide. One can recognise an Inhibitor I9 domain in the interval S35–M112. In terms of domain architecture, Peptidase S8 spans S126–Q401. Catalysis depends on charge relay system residues D158 and H189. A glycan (N-linked (GlcNAc...) asparagine) is linked at N250. S347 functions as the Charge relay system in the catalytic mechanism. N397 is a glycosylation site (N-linked (GlcNAc...) asparagine).

Belongs to the peptidase S8 family.

It localises to the secreted. Its function is as follows. Secreted subtilisin-like serine protease with keratinolytic activity that contributes to pathogenicity. The sequence is that of Subtilisin-like protease 10 (SUB10) from Arthroderma otae (strain ATCC MYA-4605 / CBS 113480) (Microsporum canis).